A 381-amino-acid chain; its full sequence is Homoserine O-succinyltransferase (381 aa).

One can recognise an AB hydrolase-1 domain in the interval Asn45–Asp360. Ser151 serves as the catalytic Nucleophile. Residue Arg221 participates in substrate binding. Residues Asp321 and His354 contribute to the active site. Asp355 is a binding site for substrate.

Belongs to the AB hydrolase superfamily. MetX family. In terms of assembly, homodimer.

The protein resides in the cytoplasm. It carries out the reaction L-homoserine + succinyl-CoA = O-succinyl-L-homoserine + CoA. The protein operates within amino-acid biosynthesis; L-methionine biosynthesis via de novo pathway; O-succinyl-L-homoserine from L-homoserine: step 1/1. Its function is as follows. Transfers a succinyl group from succinyl-CoA to L-homoserine, forming succinyl-L-homoserine. The sequence is that of Homoserine O-succinyltransferase from Burkholderia multivorans (strain ATCC 17616 / 249).